Consider the following 191-residue polypeptide: Small ribosomal subunit protein bS6 (191 aa).

Residues 168–191 (KVNLTRKPTPNKSSENKQKVEKQA) are disordered. Residues 181–191 (SENKQKVEKQA) show a composition bias toward basic and acidic residues.

The protein belongs to the bacterial ribosomal protein bS6 family.

Binds together with bS18 to 16S ribosomal RNA. This chain is Small ribosomal subunit protein bS6, found in Mycoplasmoides gallisepticum (strain R(low / passage 15 / clone 2)) (Mycoplasma gallisepticum).